The sequence spans 130 residues: Large-conductance mechanosensitive channel (130 aa).

At 1 to 14 (MWNEFKAFAMRGNI) the chain is on the cytoplasmic side. Residues 15-43 (VDLAIGVVIGGAFGKIVTSLVNDIIMPLV) traverse the membrane as a helical segment. At 44–65 (GLLLGGLDFSGLSFTFGDAVVK) the chain is on the extracellular side. The helical transmembrane segment at 66–85 (YGSFIQTIVNFLIISFSIFI) threads the bilayer. Over 86-130 (VIRTLNGLRRKKEAEEEAAEEAVDAQEELLKEIRDLLKQQAKSPE) the chain is Cytoplasmic.

It belongs to the MscL family. As to quaternary structure, homopentamer.

It localises to the cell membrane. Its function is as follows. Channel that opens in response to stretch forces in the membrane lipid bilayer. Forms a nonselective ion channel with a conductance of about 4 nanosiemens. May participate in the regulation of osmotic pressure changes within the cell. The sequence is that of Large-conductance mechanosensitive channel from Bacillus subtilis (strain 168).